The chain runs to 88 residues: Large ribosomal subunit protein bL27 (88 aa).

The tract at residues 1–23 is disordered; sequence MAHKKAGGSSRNGRDSAGRRLGV.

This sequence belongs to the bacterial ribosomal protein bL27 family.

This is Large ribosomal subunit protein bL27 from Methylorubrum extorquens (strain CM4 / NCIMB 13688) (Methylobacterium extorquens).